A 245-amino-acid chain; its full sequence is Myelin protein P0 (245 aa).

The N-terminal stretch at 1–28 is a signal peptide; that stretch reads MEPSGLRTPCSLLALVLLSALVLTPTLA. The Ig-like V-type domain maps to 29–143; that stretch reads IEVYTDREVY…VGKSSYVHLQ (115 aa). Residues 29-153 are Extracellular-facing; the sequence is IEVYTDREVY…VQEKGPARAG (125 aa). An intrachain disulfide couples Cys49 to Cys125. Asn120 is a glycosylation site (N-linked (GlcNAc...) asparagine). Residues 154–174 traverse the membrane as a helical segment; it reads LILGIIIAVALALVIVVTILI. Residues 175–245 are Cytoplasmic-facing; the sequence is LLIRYCWLRR…GIGDSRKDRK (71 aa). 2 stretches are compositionally biased toward basic and acidic residues: residues 199–208 and 224–245; these read KLHKAKDSSK and TRGKSSEKKAKGGIGDSRKDRK. A disordered region spans residues 199-245; the sequence is KLHKAKDSSKRSSRQTPILYAMLDQTRGKSSEKKAKGGIGDSRKDRK.

It belongs to the myelin P0 protein family.

Its subcellular location is the cell membrane. Its function is as follows. Creation of an extracellular membrane face which guides the wrapping process and ultimately compacts adjacent lamellae. This chain is Myelin protein P0 (mpz), found in Xenopus laevis (African clawed frog).